Consider the following 407-residue polypeptide: Phosphopentomutase (407 aa).

Mn(2+) contacts are provided by aspartate 10, aspartate 307, histidine 312, aspartate 348, histidine 349, and histidine 360.

The protein belongs to the phosphopentomutase family. It depends on Mn(2+) as a cofactor.

Its subcellular location is the cytoplasm. The enzyme catalyses 2-deoxy-alpha-D-ribose 1-phosphate = 2-deoxy-D-ribose 5-phosphate. The catalysed reaction is alpha-D-ribose 1-phosphate = D-ribose 5-phosphate. It participates in carbohydrate degradation; 2-deoxy-D-ribose 1-phosphate degradation; D-glyceraldehyde 3-phosphate and acetaldehyde from 2-deoxy-alpha-D-ribose 1-phosphate: step 1/2. In terms of biological role, isomerase that catalyzes the conversion of deoxy-ribose 1-phosphate (dRib-1-P) and ribose 1-phosphate (Rib-1-P) to deoxy-ribose 5-phosphate (dRib-5-P) and ribose 5-phosphate (Rib-5-P), respectively. In Methylobacterium nodulans (strain LMG 21967 / CNCM I-2342 / ORS 2060), this protein is Phosphopentomutase.